Consider the following 398-residue polypeptide: 1-deoxy-D-xylulose 5-phosphate reductoisomerase (398 aa).

NADPH is bound by residues T10, G11, S12, I13, G36, R37, N38, and N124. K125 is a 1-deoxy-D-xylulose 5-phosphate binding site. An NADPH-binding site is contributed by E126. D150 contacts Mn(2+). Residues S151, E152, S186, and H209 each contribute to the 1-deoxy-D-xylulose 5-phosphate site. E152 contributes to the Mn(2+) binding site. G215 is an NADPH binding site. 1-deoxy-D-xylulose 5-phosphate contacts are provided by S222, N227, K228, and E231. E231 serves as a coordination point for Mn(2+).

Belongs to the DXR family. In terms of assembly, homodimer. Mg(2+) is required as a cofactor. It depends on Mn(2+) as a cofactor.

It carries out the reaction 2-C-methyl-D-erythritol 4-phosphate + NADP(+) = 1-deoxy-D-xylulose 5-phosphate + NADPH + H(+). It functions in the pathway isoprenoid biosynthesis; isopentenyl diphosphate biosynthesis via DXP pathway; isopentenyl diphosphate from 1-deoxy-D-xylulose 5-phosphate: step 1/6. Its function is as follows. Catalyzes the NADPH-dependent rearrangement and reduction of 1-deoxy-D-xylulose-5-phosphate (DXP) to 2-C-methyl-D-erythritol 4-phosphate (MEP). The protein is 1-deoxy-D-xylulose 5-phosphate reductoisomerase of Yersinia enterocolitica serotype O:8 / biotype 1B (strain NCTC 13174 / 8081).